A 401-amino-acid chain; its full sequence is Probable tRNA sulfurtransferase (401 aa).

Residues 63 to 168 (TTAEQALSCL…EREAFLYGAR (106 aa)) form the THUMP domain. Residues 186-187 (LL), 211-212 (YF), R268, G290, and Q299 contribute to the ATP site.

The protein belongs to the ThiI family.

It localises to the cytoplasm. It carries out the reaction [ThiI sulfur-carrier protein]-S-sulfanyl-L-cysteine + a uridine in tRNA + 2 reduced [2Fe-2S]-[ferredoxin] + ATP + H(+) = [ThiI sulfur-carrier protein]-L-cysteine + a 4-thiouridine in tRNA + 2 oxidized [2Fe-2S]-[ferredoxin] + AMP + diphosphate. The catalysed reaction is [ThiS sulfur-carrier protein]-C-terminal Gly-Gly-AMP + S-sulfanyl-L-cysteinyl-[cysteine desulfurase] + AH2 = [ThiS sulfur-carrier protein]-C-terminal-Gly-aminoethanethioate + L-cysteinyl-[cysteine desulfurase] + A + AMP + 2 H(+). Its pathway is cofactor biosynthesis; thiamine diphosphate biosynthesis. In terms of biological role, catalyzes the ATP-dependent transfer of a sulfur to tRNA to produce 4-thiouridine in position 8 of tRNAs, which functions as a near-UV photosensor. Also catalyzes the transfer of sulfur to the sulfur carrier protein ThiS, forming ThiS-thiocarboxylate. This is a step in the synthesis of thiazole, in the thiamine biosynthesis pathway. The sulfur is donated as persulfide by IscS. The sequence is that of Probable tRNA sulfurtransferase from Treponema pallidum subsp. pallidum (strain SS14).